Reading from the N-terminus, the 414-residue chain is Aspartic protease-like protein pynH (414 aa).

An N-terminal signal peptide occupies residues 1–19; the sequence is MFPCSRIWSLLVAAATASA. Positions 43–410 constitute a Peptidase A1 domain; the sequence is FLTDIALGTP…DFEKLQVGIA (368 aa). N-linked (GlcNAc...) asparagine glycans are attached at residues Asn-93, Asn-102, Asn-140, Asn-151, Asn-173, Asn-202, Asn-221, Asn-258, Asn-272, Asn-335, and Asn-366. A disulfide bridge connects residues Cys-333 and Cys-371.

Belongs to the peptidase A1 family.

Its pathway is secondary metabolite biosynthesis. In terms of biological role, aspartic protease-like protein; part of the gene cluster that mediates the biosynthesis of pyranonigrins, a family of antioxidative compounds. The first step of pyranonigrins biosynthesis is performed by the hybrid PKS-NRPS synthetase that condenses 6 malonyl-CoA units to an acetyl starter unit, to form a 1,3,5-trioxotetradecane-6,8-dienyl-ACP. The enoyl reductase (ER) domain of pynA is likely to be functional during the first two rounds of polyketide chain extension, to generate the saturated C-C bonds of the alkyl side chain. PynA subsequently forms the amide bond between the acyl chain and L-serine. Although pynA has a terminal reductase domain, it appears to require the thioesterase pynI for the release of the straight-chain intermediate from pynA via the formation of a tetramic acid pyranonigrin J. The methyltransferase pynC then coverts pyranonigrin J to pyranonigrin I via N-methylation. The FAD-dependent monooxygenase pynG catalyzes an epoxidation-mediated cyclization to form the dihydro-gamma-pyrone moiety, followed by pynD-catalyzed oxidation of the alcohol to the ketone and enolization to yield the characteristic tetramic acid-fused gamma-pyrone core of pyranonigrin H. Pyranonigrin H is substrate of pynH for dehydration-mediated exo-methylene formation from the serine side chain to produce pyranonigrin E, before the oxidase pynE reduces the exo-methylene of pyranonigrin E into a pendant methyl to form pyranonigrin G. The FAD-linked oxidoreductase pynB performs the reverse reaction and converts pyranonigrin G back to pyranonigrin E. This is Aspartic protease-like protein pynH from Aspergillus niger (strain ATCC MYA-4892 / CBS 513.88 / FGSC A1513).